The sequence spans 95 residues: Cell division protein FtsB (95 aa).

Residues 1 to 3 (MRL) are Cytoplasmic-facing. The chain crosses the membrane as a helical span at residues 4–21 (FILILSAILLLFQYDLWF). Over 22-95 (GKNGYLDYKE…RIAKENKDNR (74 aa)) the chain is Periplasmic. A coiled-coil region spans residues 28–62 (DYKETAEEIAMHKAENTKLSQRNQVVAAEIRDLKD).

The protein belongs to the FtsB family. Part of a complex composed of FtsB, FtsL and FtsQ.

Its subcellular location is the cell inner membrane. Functionally, essential cell division protein. May link together the upstream cell division proteins, which are predominantly cytoplasmic, with the downstream cell division proteins, which are predominantly periplasmic. The chain is Cell division protein FtsB from Mannheimia succiniciproducens (strain KCTC 0769BP / MBEL55E).